Here is a 111-residue protein sequence, read N- to C-terminus: Large ribosomal subunit protein uL22 (111 aa).

Belongs to the universal ribosomal protein uL22 family. As to quaternary structure, part of the 50S ribosomal subunit.

Its function is as follows. This protein binds specifically to 23S rRNA; its binding is stimulated by other ribosomal proteins, e.g. L4, L17, and L20. It is important during the early stages of 50S assembly. It makes multiple contacts with different domains of the 23S rRNA in the assembled 50S subunit and ribosome. Functionally, the globular domain of the protein is located near the polypeptide exit tunnel on the outside of the subunit, while an extended beta-hairpin is found that lines the wall of the exit tunnel in the center of the 70S ribosome. The polypeptide is Large ribosomal subunit protein uL22 (Clostridium perfringens (strain ATCC 13124 / DSM 756 / JCM 1290 / NCIMB 6125 / NCTC 8237 / Type A)).